Reading from the N-terminus, the 202-residue chain is Securin (202 aa).

The interval 1–92 (MATLIYVDKE…QKQPSFSAKK (92 aa)) is disordered. An N-acetylalanine modification is found at Ala-2. The short motif at 61–64 (RKAL) is the D-box element. 2 short sequence motifs (TEK-box) span residues 71–73 (TEK) and 94–96 (TEK). The short motif at 163-173 (XPSPVKMPSPP) is the SH3-binding element. Ser-165 is subject to Phosphoserine; by CDK1.

It belongs to the securin family. As to quaternary structure, interacts with RPS10 and DNAJA1. Interacts with the caspase-like ESPL1, and prevents its protease activity probably by covering its active site. Interacts with TP53 and blocks its activity probably by blocking its binding to DNA. Interacts with the Ku 70 kDa subunit of ds-DNA kinase. Interacts with PTTG1IP. Post-translationally, phosphorylated at Ser-165 by CDK1 during mitosis. In terms of processing, phosphorylated in vitro by ds-DNA kinase. Ubiquitinated through 'Lys-11' linkage of ubiquitin moieties by the anaphase promoting complex (APC) at the onset of anaphase, conducting to its degradation. 'Lys-11'-linked ubiquitination is mediated by the E2 ligase UBE2C/UBCH10.

The protein resides in the cytoplasm. It is found in the nucleus. Its function is as follows. Regulatory protein, which plays a central role in chromosome stability, in the p53/TP53 pathway, and DNA repair. Probably acts by blocking the action of key proteins. During the mitosis, it blocks Separase/ESPL1 function, preventing the proteolysis of the cohesin complex and the subsequent segregation of the chromosomes. At the onset of anaphase, it is ubiquitinated, conducting to its destruction and to the liberation of ESPL1. Its function is however not limited to a blocking activity, since it is required to activate ESPL1. Negatively regulates the transcriptional activity and related apoptosis activity of TP53. The negative regulation of TP53 may explain the strong transforming capability of the protein when it is overexpressed. May also play a role in DNA repair via its interaction with Ku, possibly by connecting DNA damage-response pathways with sister chromatid separation. This chain is Securin (PTTG1), found in Pan troglodytes (Chimpanzee).